We begin with the raw amino-acid sequence, 173 residues long: Crossover junction endodeoxyribonuclease RuvC (173 aa).

Catalysis depends on residues D8, E67, and D139. The Mg(2+) site is built by D8, E67, and D139.

This sequence belongs to the RuvC family. As to quaternary structure, homodimer which binds Holliday junction (HJ) DNA. The HJ becomes 2-fold symmetrical on binding to RuvC with unstacked arms; it has a different conformation from HJ DNA in complex with RuvA. In the full resolvosome a probable DNA-RuvA(4)-RuvB(12)-RuvC(2) complex forms which resolves the HJ. The cofactor is Mg(2+).

The protein localises to the cytoplasm. It catalyses the reaction Endonucleolytic cleavage at a junction such as a reciprocal single-stranded crossover between two homologous DNA duplexes (Holliday junction).. The RuvA-RuvB-RuvC complex processes Holliday junction (HJ) DNA during genetic recombination and DNA repair. Endonuclease that resolves HJ intermediates. Cleaves cruciform DNA by making single-stranded nicks across the HJ at symmetrical positions within the homologous arms, yielding a 5'-phosphate and a 3'-hydroxyl group; requires a central core of homology in the junction. The consensus cleavage sequence is 5'-(A/T)TT(C/G)-3'. Cleavage occurs on the 3'-side of the TT dinucleotide at the point of strand exchange. HJ branch migration catalyzed by RuvA-RuvB allows RuvC to scan DNA until it finds its consensus sequence, where it cleaves and resolves the cruciform DNA. The chain is Crossover junction endodeoxyribonuclease RuvC from Shewanella frigidimarina (strain NCIMB 400).